Consider the following 235-residue polypeptide: MVFNVNILTIFPEMFPGTLGYSVIGKALNKGIWNLNVIDIRSFATDKHKTVDDKPYGGGPGMIMKADVIGSAIDNVLSTNKETKLIYMSPSGVKLNQDISGQLAHFSNITILCGRFEGIDRRVLDFYDFYEISIGDYILSGGEVASMVLIETCVRLIPGVVSNVDSIRDESFTASYGLEYSQYTRPANWRGLEVPSVLVSGNHKKINLWKTQQSYRITKQRRPELTNTADGDIYE.

S-adenosyl-L-methionine-binding positions include G114 and 134 to 139 (IGDYIL).

It belongs to the RNA methyltransferase TrmD family. In terms of assembly, homodimer.

The protein localises to the cytoplasm. It catalyses the reaction guanosine(37) in tRNA + S-adenosyl-L-methionine = N(1)-methylguanosine(37) in tRNA + S-adenosyl-L-homocysteine + H(+). In terms of biological role, specifically methylates guanosine-37 in various tRNAs. This is tRNA (guanine-N(1)-)-methyltransferase from Ehrlichia ruminantium (strain Welgevonden).